The primary structure comprises 341 residues: G2/mitotic-specific cyclin C13-1 (341 aa).

It belongs to the cyclin family. Cyclin AB subfamily.

Essential for the control of the cell cycle at the G2/M (mitosis) transition. Interacts with the CDC2 and CDK2 protein kinases to form MPF. G2/M cyclins accumulate steadily during G2 and are abruptly destroyed at mitosis. This chain is G2/mitotic-specific cyclin C13-1, found in Daucus carota (Wild carrot).